The sequence spans 226 residues: uncharacterized protein (226 aa).

An HTH arsR-type domain is found at 1-92; sequence MNPNIAKISS…QLLHIAPKAK (92 aa). The H-T-H motif DNA-binding region spans 32–55; it reads AGELAYLANIKPQTASFHLNKLLE.

This is an uncharacterized protein from Bacillus subtilis (strain 168).